Reading from the N-terminus, the 204-residue chain is N-(5'-phosphoribosyl)anthranilate isomerase (204 aa).

The protein belongs to the TrpF family.

The catalysed reaction is N-(5-phospho-beta-D-ribosyl)anthranilate = 1-(2-carboxyphenylamino)-1-deoxy-D-ribulose 5-phosphate. It participates in amino-acid biosynthesis; L-tryptophan biosynthesis; L-tryptophan from chorismate: step 3/5. The chain is N-(5'-phosphoribosyl)anthranilate isomerase from Bacillus cereus (strain ZK / E33L).